We begin with the raw amino-acid sequence, 643 residues long: COP9 signalosome complex subunit 10 (643 aa).

A compositionally biased stretch (acidic residues) spans 1–33; the sequence is MTDESDNYNDFMMSDEDMDSIEMEDEENDVEGD. The disordered stretch occupies residues 1–37; that stretch reads MTDESDNYNDFMMSDEDMDSIEMEDEENDVEGDEGQR. The PCI domain occupies 331–517; it reads CKEEFWECLK…DTVTFYSEQH (187 aa). Residues 573-584 show a composition bias toward polar residues; it reads DSQSHSKSNTKS. Positions 573–594 are disordered; it reads DSQSHSKSNTKSMSRHVSGHDP.

In terms of assembly, component of a COP9 signalosome-like (CSN) complex.

The protein localises to the cytoplasm. The protein resides in the nucleus. In terms of biological role, component of the COP9 signalosome (CSN) complex that acts as an regulator of the ubiquitin (Ubl) conjugation pathway by mediating the deneddylation of the cullin subunit of SCF-type E3 ubiquitin-protein ligase complexes. The CSN complex is involved in the regulation of the mating pheromone response. The polypeptide is COP9 signalosome complex subunit 10 (RRI2) (Candida glabrata (strain ATCC 2001 / BCRC 20586 / JCM 3761 / NBRC 0622 / NRRL Y-65 / CBS 138) (Yeast)).